Here is a 278-residue protein sequence, read N- to C-terminus: Manganese import system permease protein ScaB (278 aa).

8 helical membrane passes run 18–38, 61–81, 94–114, 134–154, 174–194, 196–216, 222–242, and 246–266; these read ALIT…FIIL, ILGI…SIII, TAIG…ISVA, LDMW…SIFF, VNFY…TAMQ, VGTI…YLYA, MILL…FIGY, and VAAG…SFFI.

The protein belongs to the ABC-3 integral membrane protein family. The complex is composed of two ATP-binding proteins (ScaC), two transmembrane proteins (ScaB) and a solute-binding protein (ScaA).

The protein localises to the cell membrane. In terms of biological role, part of the high-affinity ABC transporter complex ScaABC involved in manganese import. Probably responsible for the translocation of the substrate across the membrane. Essential for growth under Mn(2+)-limiting conditions. The protein is Manganese import system permease protein ScaB of Streptococcus gordonii.